The chain runs to 55 residues: Large ribosomal subunit protein bL33 (55 aa).

The protein belongs to the bacterial ribosomal protein bL33 family.

This Burkholderia cenocepacia (strain ATCC BAA-245 / DSM 16553 / LMG 16656 / NCTC 13227 / J2315 / CF5610) (Burkholderia cepacia (strain J2315)) protein is Large ribosomal subunit protein bL33.